A 341-amino-acid polypeptide reads, in one-letter code: MKALSKLKAEEGIWMTDVPEPEVGHNDLLIKIRKTAICGTDVHIYNWDEWSQKTIPVPMVVGHEYVGEVVGIGQEVKGFKIGDRVSGEGHITCGHCRNCRGGRTHLCRNTVGVGVNRPGCFAEYLVIPAFNAFKIPDNISDDLASIFDPFGNAVHTALSFDLVGEDVLVSGAGPIGIMAAAVAKHVGARNVVITDVNEYRLSLARKMGVTRAVDVSKENLNDVMAELGMTEGFDVGLEMSGAPPAFRSMLDTMNHGGRIAMLGIPPSDMSIDWNKVIFKGLFIKGIYGREMFETWYKMAALIQSGLDLTPIITHHFGIDDFQKGFDAMRSGQSGKVILSWD.

Cysteine 38 is a binding site for Zn(2+). Active-site charge relay system residues include threonine 40 and histidine 43. Positions 63, 64, 93, 96, 99, and 107 each coordinate Zn(2+). NAD(+)-binding positions include isoleucine 175, aspartate 195, arginine 200, 262–264 (LGI), and 286–287 (IY).

It belongs to the zinc-containing alcohol dehydrogenase family. As to quaternary structure, homotetramer. Zn(2+) serves as cofactor.

It localises to the cytoplasm. The catalysed reaction is L-threonine + NAD(+) = (2S)-2-amino-3-oxobutanoate + NADH + H(+). Its pathway is amino-acid degradation; L-threonine degradation via oxydo-reductase pathway; glycine from L-threonine: step 1/2. Catalyzes the NAD(+)-dependent oxidation of L-threonine to 2-amino-3-ketobutyrate. The chain is L-threonine 3-dehydrogenase from Enterobacter sp. (strain 638).